A 255-amino-acid chain; its full sequence is tRNA pseudouridine synthase A (255 aa).

Asp52 acts as the Nucleophile in catalysis. A substrate-binding site is contributed by Tyr111.

The protein belongs to the tRNA pseudouridine synthase TruA family. Homodimer.

It catalyses the reaction uridine(38/39/40) in tRNA = pseudouridine(38/39/40) in tRNA. Functionally, formation of pseudouridine at positions 38, 39 and 40 in the anticodon stem and loop of transfer RNAs. In Cereibacter sphaeroides (strain ATCC 17029 / ATH 2.4.9) (Rhodobacter sphaeroides), this protein is tRNA pseudouridine synthase A.